A 227-amino-acid polypeptide reads, in one-letter code: Probable septum site-determining protein MinC (227 aa).

Belongs to the MinC family. Interacts with MinD and FtsZ.

Functionally, cell division inhibitor that blocks the formation of polar Z ring septums. Rapidly oscillates between the poles of the cell to destabilize FtsZ filaments that have formed before they mature into polar Z rings. Prevents FtsZ polymerization. The protein is Probable septum site-determining protein MinC of Acetivibrio thermocellus (strain ATCC 27405 / DSM 1237 / JCM 9322 / NBRC 103400 / NCIMB 10682 / NRRL B-4536 / VPI 7372) (Clostridium thermocellum).